The primary structure comprises 378 residues: 3-dehydroquinate synthase (378 aa).

NAD(+) is bound by residues 115–119 (GVVGD), 139–140 (TS), Lys152, and Lys161. Zn(2+) is bound by residues Glu194, His256, and His275.

Belongs to the sugar phosphate cyclases superfamily. Dehydroquinate synthase family. Co(2+) serves as cofactor. Zn(2+) is required as a cofactor. The cofactor is NAD(+).

It is found in the cytoplasm. The enzyme catalyses 7-phospho-2-dehydro-3-deoxy-D-arabino-heptonate = 3-dehydroquinate + phosphate. It functions in the pathway metabolic intermediate biosynthesis; chorismate biosynthesis; chorismate from D-erythrose 4-phosphate and phosphoenolpyruvate: step 2/7. Its function is as follows. Catalyzes the conversion of 3-deoxy-D-arabino-heptulosonate 7-phosphate (DAHP) to dehydroquinate (DHQ). In Brucella anthropi (strain ATCC 49188 / DSM 6882 / CCUG 24695 / JCM 21032 / LMG 3331 / NBRC 15819 / NCTC 12168 / Alc 37) (Ochrobactrum anthropi), this protein is 3-dehydroquinate synthase.